The primary structure comprises 1085 residues: MPHFTVVPVDGPRRGDYDNLEGLSWVDYGERAEREDPDGHGNHRESSPFLCPLEASRGSDYYDRNLALFEEELDIRPKVSSLLGKLVSYTNLTQGAKEHEEAESGEGTRRRAAKAPSMGTLMGVYLPCLQNIFGVILFLRLTWMVGTAGVLQALLIVLICCCCTLLTAISMSAIATNGVVPAGGSYFMISRSLGPEFGGAVGLCFYLGTTFAAAMYILGAIEILLTYIAPPAAIFYPSGTHDTSNATLNNMRVYGTVFLSFMTLVVFVGVKYVNKFASLFLACVIISILSIYAGGIKSMFDPPVFPVCMLGNRTLSRDQFDICAKTTMVDNETVATRLWSFFCHSPNLTTDSCDPYFLLNNVTEIPGIPGAAAGVLQENLWSAYLEKGEVVEKRGLPSTDAVGLKENLPLYVVADIATSFTVLVGIFFPSVTGIMAGSNRSGDLRDAQKSIPVGTILAIVTTSLVYFSSVVLFGACIEGVVLRDKYGDGVSRNLVVGTLAWPSPWVIVVGSFFSTCGAGLQSLTGAPRLLQAIAKDNIIPFLRVFGHGKANGEPTWALLLTALIAELGILIASLDMVAPILSMFFLMCYLFVNLACAVQTLLRTPNWRPRFKYYHWALSFLGMSLCLALMFVSSWYYALVAMLIAGMIYKYIEYQGAEKEWGDGIRGLSLSAARYALLRLEEGPPHTKNWRPQLLVLLKLDEDLHVKYPRLLTFASQLKAGKGLTIVGSVIQGSFLESYGEAQAAEQTIKNMMKIEKVKGFCQVVVASKVREGLAHLIQSCGLGGMRHNSVVLGWPYGWRQSEDPRAWKTFIDTVRCTTAAHLALLVPKNIAFYPSNHERYLEGHIDVWWIVHDGGMLMLLPFLLRQHKVWRKCRMRIFTVAQMDDNSIQMKKDLAVFLYHLRLEAEVEVVEMHNSDISAYTYERTLMMEQRSQMLRQMRLTKTEREREAQLVKDRHSALRLESLYSDEEDEAAAGADKIQMTWTRDKYMTEPWDPSHTPDNFRELVHIKPDQSNVRRMHTAVKLNEVIVTRSHDARLVLLNMPGPPKNSEGDENYMEFLEVLTEGLERVLLVRGGGREVITIYS.

Residues 1 to 119 (MPHFTVVPVD…RRAAKAPSMG (119 aa)) are Cytoplasmic-facing. Ser24 carries the phosphoserine modification. A compositionally biased stretch (basic and acidic residues) spans 28–46 (YGERAEREDPDGHGNHRES). Positions 28 to 47 (YGERAEREDPDGHGNHRESS) are disordered. Phosphoserine occurs at positions 47, 59, 81, and 88. A discontinuously helical membrane pass occupies residues 120 to 141 (TLMGVYLPCLQNIFGVILFLRL). 2 residues coordinate K(+): Asn131 and Ile132. The Extracellular portion of the chain corresponds to 142–149 (TWMVGTAG). The helical transmembrane segment at 150-172 (VLQALLIVLICCCCTLLTAISMS) threads the bilayer. At 173–196 (AIATNGVVPAGGSYFMISRSLGPE) the chain is on the cytoplasmic side. The chain crosses the membrane as a helical span at residues 197–225 (FGGAVGLCFYLGTTFAAAMYILGAIEILL). K(+) is bound at residue Tyr216. Over 226 to 248 (TYIAPPAAIFYPSGTHDTSNATL) the chain is Extracellular. A glycan (N-linked (GlcNAc...) asparagine) is linked at Asn245. 2 consecutive transmembrane segments (helical) span residues 249-271 (NNMRVYGTVFLSFMTLVVFVGVK) and 272-297 (YVNKFASLFLACVIISILSIYAGGIK). Residues 298 to 419 (SMFDPPVFPV…LYVVADIATS (122 aa)) are Extracellular-facing. Residues Cys308 and Cys323 are joined by a disulfide bond. Asn312, Asn331, and Asn347 each carry an N-linked (GlcNAc...) asparagine glycan. A disulfide bond links Cys343 and Cys353. Residues 420–440 (FTVLVGIFFPSVTGIMAGSNR) traverse the membrane as a helical segment. K(+) contacts are provided by Pro429 and Thr432. Residues Gly433, Ile434, and Met435 each coordinate chloride. Residues 441–450 (SGDLRDAQKS) are Cytoplasmic-facing. Residues 451–473 (IPVGTILAIVTTSLVYFSSVVLF) form a helical membrane-spanning segment. Residues 474–504 (GACIEGVVLRDKYGDGVSRNLVVGTLAWPSP) lie on the Extracellular side of the membrane. A helical membrane pass occupies residues 505-531 (WVIVVGSFFSTCGAGLQSLTGAPRLLQ). At 532 to 554 (AIAKDNIIPFLRVFGHGKANGEP) the chain is on the cytoplasmic side. Helical transmembrane passes span 555 to 575 (TWALLLTALIAELGILIASLD) and 576 to 598 (MVAPILSMFFLMCYLFVNLACAV). Tyr589 contacts chloride. Over 599-612 (QTLLRTPNWRPRFK) the chain is Cytoplasmic. 2 consecutive transmembrane segments (helical) span residues 613–635 (YYHWALSFLGMSLCLALMFVSSW) and 636–651 (YYALVAMLIAGMIYKY). Residues 652 to 1085 (IEYQGAEKEW…GGREVITIYS (434 aa)) are Cytoplasmic-facing. Residues 665-681 (IRGLSLSAARYALLRLE) are scissor helix. ATP is bound by residues Leu697, Lys699, Lys707, Tyr708, and Val730. Ser734 carries the post-translational modification Phosphoserine. Positions 794, 795, and 797 each coordinate ATP. A phosphoserine mark is found at Ser916 and Ser967. Thr983 is modified (phosphothreonine). A Phosphoserine modification is found at Ser1050.

This sequence belongs to the SLC12A transporter family. K/Cl co-transporter subfamily. Homodimer; adopts a domain-swap conformation at the scissor helices connecting the transmembrane domain and C-terminal domain. Heterodimer with other K-Cl cotransporters. N-glycosylated. In terms of processing, phosphorylated, phosphorylation may regulate transporter activity.

It is found in the cell membrane. The catalysed reaction is K(+)(in) + chloride(in) = K(+)(out) + chloride(out). Its activity is regulated as follows. Inhibited by WNK3. Its function is as follows. Mediates electroneutral potassium-chloride cotransport when activated by cell swelling. May contribute to cell volume homeostasis in single cells. May be involved in the regulation of basolateral Cl(-) exit in NaCl absorbing epithelia. The sequence is that of Solute carrier family 12 member 4 (SLC12A4) from Oryctolagus cuniculus (Rabbit).